A 208-amino-acid polypeptide reads, in one-letter code: Proheparin-binding EGF-like growth factor (208 aa).

A signal peptide spans M1–A19. Residues L20 to R62 constitute a propeptide, or 72, or 73, or 76, or 81. Topologically, residues L20–T160 are extracellular. The disordered stretch occupies residues L33–G56. The span at G36 to Q49 shows a compositional bias: polar residues. A glycan (O-linked (GalNAc...) threonine) is linked at T37. S38 carries an O-linked (GalNAc...) serine glycan. O-linked (GalNAc...) threonine glycans are attached at residues T44, T47, T75, and T85. The interval A82–K104 is disordered. Residues K93 to G102 are compositionally biased toward basic residues. One can recognise an EGF-like domain in the interval K104–H144. Cystine bridges form between C108–C121, C116–C132, and C134–C143. The propeptide at P149–H208 is C-terminal. Residues T161–F184 form a helical membrane-spanning segment. At R185–H208 the chain is on the cytoplasmic side.

As to quaternary structure, interacts with FBLN1. Interacts with EGFR and ERBB4. Several N-termini have been identified by direct sequencing. The forms with N-termini 63, 73 and 74 have been tested and found to be biologically active. In terms of processing, O-glycosylated with core 1 or possibly core 8 glycans. Thr-47 is a minor glycosylation site compared to Thr-44.

The protein localises to the secreted. The protein resides in the extracellular space. It is found in the cell membrane. Functionally, growth factor that mediates its effects via EGFR, ERBB2 and ERBB4. Required for normal cardiac valve formation and normal heart function. Promotes smooth muscle cell proliferation. May be involved in macrophage-mediated cellular proliferation. It is mitogenic for fibroblasts, but not endothelial cells. It is able to bind EGF receptor/EGFR with higher affinity than EGF itself and is a far more potent mitogen for smooth muscle cells than EGF. Also acts as a diphtheria toxin receptor. In Homo sapiens (Human), this protein is Proheparin-binding EGF-like growth factor (HBEGF).